The sequence spans 353 residues: Protein MGF 360-11L (353 aa).

The protein belongs to the asfivirus MGF 360 family. As to quaternary structure, interacts with host TBK1 ad IRF7.

In terms of biological role, plays a role in virus cell tropism, and may be required for efficient virus replication in macrophages. In addition, inhibits the phosphorylation of host TBK1 and IRF7 and thereby negatively regulates the host cGAS signaling pathway and antagonizes IFN-mediated antiviral activity. The chain is Protein MGF 360-11L from Ornithodoros (relapsing fever ticks).